The primary structure comprises 357 residues: Ribosomal RNA large subunit methyltransferase F (357 aa).

Residues 1 to 15 are compositionally biased toward polar residues; it reads MPKPPRSTQILSCNA. A disordered region spans residues 1–33; that stretch reads MPKPPRSTQILSCNAPNGKPKTQHPSARAKVKR.

Belongs to the methyltransferase superfamily. METTL16/RlmF family.

It is found in the cytoplasm. The enzyme catalyses adenosine(1618) in 23S rRNA + S-adenosyl-L-methionine = N(6)-methyladenosine(1618) in 23S rRNA + S-adenosyl-L-homocysteine + H(+). Specifically methylates the adenine in position 1618 of 23S rRNA. This is Ribosomal RNA large subunit methyltransferase F from Shewanella putrefaciens (strain CN-32 / ATCC BAA-453).